A 312-amino-acid polypeptide reads, in one-letter code: Malate dehydrogenase (312 aa).

Residues 7–13 and Asp-34 each bind NAD(+); that span reads GAAGGIG. Substrate is bound by residues Arg-81 and Arg-87. Residues Asn-94 and 117–119 contribute to the NAD(+) site; that span reads ITN. Substrate contacts are provided by Asn-119 and Arg-153. The active-site Proton acceptor is His-177. Position 227 (Met-227) interacts with NAD(+).

This sequence belongs to the LDH/MDH superfamily. MDH type 1 family. In terms of assembly, homodimer.

The catalysed reaction is (S)-malate + NAD(+) = oxaloacetate + NADH + H(+). In terms of biological role, catalyzes the reversible oxidation of malate to oxaloacetate. This chain is Malate dehydrogenase, found in Yersinia pseudotuberculosis serotype O:1b (strain IP 31758).